Consider the following 320-residue polypeptide: Probable 5-dehydro-4-deoxyglucarate dehydratase (320 aa).

This sequence belongs to the DapA family.

It catalyses the reaction 5-dehydro-4-deoxy-D-glucarate + H(+) = 2,5-dioxopentanoate + CO2 + H2O. The protein operates within carbohydrate acid metabolism; D-glucarate degradation; 2,5-dioxopentanoate from D-glucarate: step 2/2. This Streptomyces griseus subsp. griseus (strain JCM 4626 / CBS 651.72 / NBRC 13350 / KCC S-0626 / ISP 5235) protein is Probable 5-dehydro-4-deoxyglucarate dehydratase.